Here is a 100-residue protein sequence, read N- to C-terminus: Urease subunit gamma (100 aa).

The protein belongs to the urease gamma subunit family. As to quaternary structure, heterotrimer of UreA (gamma), UreB (beta) and UreC (alpha) subunits. Three heterotrimers associate to form the active enzyme.

Its subcellular location is the cytoplasm. The catalysed reaction is urea + 2 H2O + H(+) = hydrogencarbonate + 2 NH4(+). Its pathway is nitrogen metabolism; urea degradation; CO(2) and NH(3) from urea (urease route): step 1/1. In Marinomonas sp. (strain MWYL1), this protein is Urease subunit gamma.